A 152-amino-acid chain; its full sequence is Deoxyuridine 5'-triphosphate nucleotidohydrolase (152 aa).

Substrate is bound by residues 71 to 73 (RSG), Asn84, 88 to 90 (LID), and Met98.

The protein belongs to the dUTPase family. Mg(2+) is required as a cofactor.

It catalyses the reaction dUTP + H2O = dUMP + diphosphate + H(+). It functions in the pathway pyrimidine metabolism; dUMP biosynthesis; dUMP from dCTP (dUTP route): step 2/2. Its function is as follows. This enzyme is involved in nucleotide metabolism: it produces dUMP, the immediate precursor of thymidine nucleotides and it decreases the intracellular concentration of dUTP so that uracil cannot be incorporated into DNA. This is Deoxyuridine 5'-triphosphate nucleotidohydrolase from Coxiella burnetii (strain RSA 331 / Henzerling II).